The following is a 621-amino-acid chain: Laccase-2 (621 aa).

The N-terminal stretch at 1 to 23 (MMKSFFSAAALLLGLVAPSAVLA) is a signal peptide. Residues 24–48 (APSLPGVPREVTRDLLRPVEERQSS) constitute a propeptide that is removed on maturation. A disulfide bridge connects residues cysteine 49 and cysteine 57. 2 consecutive Plastocyanin-like domains span residues 78 to 201 (TRTY…IVVN) and 210 to 367 (IDLG…LPTN). An N-linked (GlcNAc...) asparagine glycan is attached at asparagine 133. Residues histidine 138, histidine 140, histidine 183, and histidine 185 each coordinate Cu cation. 2 cysteine pairs are disulfide-bonded: cysteine 159–cysteine 586 and cysteine 343–cysteine 377. Residues asparagine 261, asparagine 276, asparagine 289, asparagine 325, and asparagine 334 are each glycosylated (N-linked (GlcNAc...) asparagine). Asparagine 401, asparagine 421, and asparagine 441 each carry an N-linked (GlcNAc...) asparagine glycan. The Plastocyanin-like 3 domain maps to 430-566 (DKPIVDYVIA…GGLSVQYLER (137 aa)). 7 residues coordinate Cu cation: histidine 476, histidine 479, histidine 481, histidine 548, cysteine 549, histidine 550, and histidine 554. A propeptide spanning residues 606-621 (KVKKWVGEHPDWYIKN) is cleaved from the precursor.

The protein belongs to the multicopper oxidase family. As to quaternary structure, monomer. Cu cation serves as cofactor. Post-translationally, proteolytically processed at both its N-terminus and its C-terminus.

The protein resides in the secreted. It carries out the reaction 4 hydroquinone + O2 = 4 benzosemiquinone + 2 H2O. In terms of biological role, probably involved in lignin degradation and in the detoxification of lignin-derived products in its natural habitat (herbivorous dung), which is rich in lignin of grasses and straw. Probably involved in melanin synthesis and in perithecia development. The protein is Laccase-2 (LAC2) of Podospora anserina (Pleurage anserina).